A 91-amino-acid polypeptide reads, in one-letter code: Small ribosomal subunit protein uS19 (91 aa).

Belongs to the universal ribosomal protein uS19 family.

Its function is as follows. Protein S19 forms a complex with S13 that binds strongly to the 16S ribosomal RNA. The chain is Small ribosomal subunit protein uS19 (rpsS) from Mycoplasmopsis pulmonis (strain UAB CTIP) (Mycoplasma pulmonis).